The following is a 146-amino-acid chain: Nucleoside diphosphate kinase (146 aa).

Residues Lys11, Phe59, Arg87, Thr93, Arg104, and Asn114 each coordinate ATP. Residue His117 is the Pros-phosphohistidine intermediate of the active site.

Belongs to the NDK family. Homotetramer. Mg(2+) serves as cofactor.

It is found in the cytoplasm. It carries out the reaction a 2'-deoxyribonucleoside 5'-diphosphate + ATP = a 2'-deoxyribonucleoside 5'-triphosphate + ADP. The enzyme catalyses a ribonucleoside 5'-diphosphate + ATP = a ribonucleoside 5'-triphosphate + ADP. Major role in the synthesis of nucleoside triphosphates other than ATP. The ATP gamma phosphate is transferred to the NDP beta phosphate via a ping-pong mechanism, using a phosphorylated active-site intermediate. The polypeptide is Nucleoside diphosphate kinase (Anaeromyxobacter sp. (strain Fw109-5)).